Reading from the N-terminus, the 239-residue chain is Prolyl hydroxylase EGLN3 (239 aa).

Residues 62-73 (AGPRAGVSKRHL) are beta(2)beta(3) 'finger-like' loop. The required for interaction with ADRB2 stretch occupies residues 88 to 104 (CEAINFLLSLIDRLVLY). The Fe2OG dioxygenase domain maps to 116-214 (ERSKAMVACY…RYAMTVWYFD (99 aa)). His135, Asp137, and His196 together coordinate Fe cation. Arg205 lines the 2-oxoglutarate pocket.

In terms of assembly, interacts with ADRB2; the interaction hydroxylates ADRB2 facilitating its ubiquitination by the VHL-E3 ligase complex. Interacts with PKM; the interaction hydroxylates PKM in hypoxia. Interacts with WDR83; the interaction leads to almost complete elimination of HIF-mediated reporter activity. Interacts with BCL2 (via its BH4 domain); the interaction disrupts the BAX-BCL4 complex inhibiting the anti-apoptotic activity of BCL2. Interacts with LIMD1, WTIP and AJUBA. Fe(2+) serves as cofactor. L-ascorbate is required as a cofactor. In terms of processing, ubiquitinated by SIAH1 and/or SIAH2 in response to the unfolded protein response (UPR), leading to its degradation. Highly expressed in cardiac and smooth muscle. Also high expression in brain, skeletal muscle and kidney. Low levels in lung.

It is found in the nucleus. The protein localises to the cytoplasm. It carries out the reaction L-prolyl-[protein] + 2-oxoglutarate + O2 = trans-4-hydroxy-L-prolyl-[protein] + succinate + CO2. It catalyses the reaction L-prolyl-[hypoxia-inducible factor alpha subunit] + 2-oxoglutarate + O2 = trans-4-hydroxy-L-prolyl-[hypoxia-inducible factor alpha subunit] + succinate + CO2. Its function is as follows. Prolyl hydroxylase that mediates hydroxylation of proline residues in target proteins, such as PKM, TELO2, ATF4 and HIF1A. Target proteins are preferentially recognized via a LXXLAP motif. Cellular oxygen sensor that catalyzes, under normoxic conditions, the post-translational formation of 4-hydroxyproline in hypoxia-inducible factor (HIF) alpha proteins. Hydroxylates a specific proline found in each of the oxygen-dependent degradation (ODD) domains (N-terminal, NODD, and C-terminal, CODD) of HIF1A. Also hydroxylates HIF2A. Has a preference for the CODD site for both HIF1A and HIF2A. Hydroxylation on the NODD site by EGLN3 appears to require prior hydroxylation on the CODD site. Hydroxylated HIFs are then targeted for proteasomal degradation via the von Hippel-Lindau ubiquitination complex. Under hypoxic conditions, the hydroxylation reaction is attenuated allowing HIFs to escape degradation resulting in their translocation to the nucleus, heterodimerization with HIF1B, and increased expression of hypoxy-inducible genes. ELGN3 is the most important isozyme in limiting physiological activation of HIFs (particularly HIF2A) in hypoxia. Also hydroxylates PKM in hypoxia, limiting glycolysis. Under normoxia, hydroxylates and regulates the stability of ADRB2. Regulator of cardiomyocyte and neuronal apoptosis. In cardiomyocytes, inhibits the anti-apoptotic effect of BCL2 by disrupting the BAX-BCL2 complex. In neurons, has a NGF-induced proapoptotic effect, probably through regulating CASP3 activity. Also essential for hypoxic regulation of neutrophilic inflammation. Plays a crucial role in DNA damage response (DDR) by hydroxylating TELO2, promoting its interaction with ATR which is required for activation of the ATR/CHK1/p53 pathway. Also mediates hydroxylation of ATF4, leading to decreased protein stability of ATF4. The sequence is that of Prolyl hydroxylase EGLN3 from Mus musculus (Mouse).